A 244-amino-acid polypeptide reads, in one-letter code: 3-deoxy-manno-octulosonate cytidylyltransferase (244 aa).

Belongs to the KdsB family.

Its subcellular location is the cytoplasm. It catalyses the reaction 3-deoxy-alpha-D-manno-oct-2-ulosonate + CTP = CMP-3-deoxy-beta-D-manno-octulosonate + diphosphate. The protein operates within nucleotide-sugar biosynthesis; CMP-3-deoxy-D-manno-octulosonate biosynthesis; CMP-3-deoxy-D-manno-octulosonate from 3-deoxy-D-manno-octulosonate and CTP: step 1/1. It functions in the pathway bacterial outer membrane biogenesis; lipopolysaccharide biosynthesis. Its function is as follows. Activates KDO (a required 8-carbon sugar) for incorporation into bacterial lipopolysaccharide in Gram-negative bacteria. The protein is 3-deoxy-manno-octulosonate cytidylyltransferase of Vesicomyosocius okutanii subsp. Calyptogena okutanii (strain HA).